A 909-amino-acid chain; its full sequence is WD repeat-containing protein 20 homolog (909 aa).

The disordered stretch occupies residues 58–132; the sequence is SPAQGKLGSD…SAGNNTVEAR (75 aa). Composition is skewed to low complexity over residues 80–107 and 115–127; these read GANT…AISN and SHSN…AGNN. 4 WD repeats span residues 248–288, 321–362, 363–402, and 470–517; these read IDKT…AATA, TDNC…GIAR, SYFG…VVAR, and ADRN…LRHP. Disordered regions lie at residues 458–483, 554–628, 661–699, 720–739, and 749–775; these read FEGF…FRSD, SGQA…AGSV, SDSI…NSGS, SEKK…RQHR, and NQHN…GHSS. 2 stretches are compositionally biased toward polar residues: residues 555-569 and 595-606; these read GQAT…SCSP and TANCTISSQSSP. Low complexity-rich tracts occupy residues 612–628 and 673–699; these read EAAT…AGSV and GQRP…NSGS. The WD 5 repeat unit spans residues 856–893; it reads IAHERLTALIFREDCFLTACQDGFIYTWARPGHATHAT.

As to quaternary structure, component of the Usp12-46 deubiquitylase complex consisting of Usp12-46, Wdr20 and Uaf1; regulatory subunit that, together with Uaf1, stabilizes Usp12-46. The Usp12-46 deubiquitylase complex associates with arr/arrow; the interaction leads to deubiquitination and stabilization of arr/arrow.

Regulatory component of the Usp12-46 deubiquitylase complex. This complex deubiquitylates the wg/wingless-signaling receptor arr/arrow, which stabilizes the receptor and increases its concentration at the cell surface; this enhances the sensitivity of cells to wg/wingless-signal stimulation. This increases the amplitude and spatial range of the signaling response to the wg/wingless morphogen gradient, facilitating the precise concentration-dependent regulation of its target genes. Required for wg/wingless-mediated signaling in the wing imaginal disc and for wg/wingless-dependent regulation of intestinal stem cell proliferation. In Drosophila melanogaster (Fruit fly), this protein is WD repeat-containing protein 20 homolog.